A 239-amino-acid chain; its full sequence is tRNA (guanine-N(1)-)-methyltransferase (239 aa).

Residues glycine 108 and leucine 127 to leucine 132 each bind S-adenosyl-L-methionine.

The protein belongs to the RNA methyltransferase TrmD family. In terms of assembly, homodimer.

Its subcellular location is the cytoplasm. The catalysed reaction is guanosine(37) in tRNA + S-adenosyl-L-methionine = N(1)-methylguanosine(37) in tRNA + S-adenosyl-L-homocysteine + H(+). In terms of biological role, specifically methylates guanosine-37 in various tRNAs. The chain is tRNA (guanine-N(1)-)-methyltransferase from Streptococcus pneumoniae (strain JJA).